We begin with the raw amino-acid sequence, 483 residues long: Altronate oxidoreductase (483 aa).

NAD(+) is bound at residue 18–29 (IIQFGEGNFLRA).

This sequence belongs to the mannitol dehydrogenase family. UxaB subfamily.

It catalyses the reaction D-altronate + NAD(+) = keto-D-tagaturonate + NADH + H(+). Its pathway is carbohydrate metabolism; pentose and glucuronate interconversion. This is Altronate oxidoreductase from Escherichia coli O6:K15:H31 (strain 536 / UPEC).